Here is a 459-residue protein sequence, read N- to C-terminus: GTPase Der (459 aa).

EngA-type G domains lie at 3–169 and 183–358; these read PLVA…PPKE and IRLA…DQFR. GTP is bound by residues 9-16, 56-60, 119-122, 189-196, 236-240, and 301-304; these read GRPNVGKS, DTGGF, NKLD, DTAGI, and NKWD. Positions 359-442 constitute a KH-like domain; that stretch reads FRAPTPQLNR…PIRLIFKGRP (84 aa).

The protein belongs to the TRAFAC class TrmE-Era-EngA-EngB-Septin-like GTPase superfamily. EngA (Der) GTPase family. In terms of assembly, associates with the 50S ribosomal subunit.

In terms of biological role, GTPase that plays an essential role in the late steps of ribosome biogenesis. In Myxococcus xanthus (strain DK1622), this protein is GTPase Der.